A 74-amino-acid polypeptide reads, in one-letter code: Putative defensin-like protein 27 (74 aa).

A signal peptide spans 1–19 (MVHPRFVFFAFLALSVLLA). Cystine bridges form between Cys-36/Cys-74, Cys-46/Cys-65, Cys-51/Cys-70, and Cys-55/Cys-72.

The protein belongs to the DEFL family.

It is found in the secreted. The chain is Putative defensin-like protein 27 from Arabidopsis thaliana (Mouse-ear cress).